The sequence spans 108 residues: X antigen family member 5 (108 aa).

The disordered stretch occupies residues 20-108 (VGPMLEPSVP…PEGGEGKPQL (89 aa)). 2 stretches are compositionally biased toward basic and acidic residues: residues 40-52 (SQDHTPGQKREDD) and 94-108 (EQFKMPEGGEGKPQL).

It belongs to the GAGE family.

The sequence is that of X antigen family member 5 (XAGE5) from Homo sapiens (Human).